We begin with the raw amino-acid sequence, 341 residues long: HTH-type transcriptional repressor PurR (341 aa).

An HTH lacI-type domain is found at 2 to 56; the sequence is ATIKDVAKHAGVSTTTVSHVINKTRFVAEDTKAAVWAAIKALNYSPSAVARSLKV. Residues 4-23 constitute a DNA-binding region (H-T-H motif); that stretch reads IKDVAKHAGVSTTTVSHVIN. The DNA-binding element occupies 48-56; that stretch reads SAVARSLKV. Hypoxanthine contacts are provided by Tyr-73, Arg-190, Thr-192, Phe-221, and Asp-275.

Homodimer.

It functions in the pathway purine metabolism; purine nucleotide biosynthesis [regulation]. Is the main repressor of the genes involved in the de novo synthesis of purine nucleotides, regulating purB, purC, purEK, purF, purHD, purL, purMN and guaBA expression. PurR is allosterically activated to bind its cognate DNA by binding the purine corepressors, hypoxanthine or guanine, thereby effecting transcription repression. The protein is HTH-type transcriptional repressor PurR of Photorhabdus laumondii subsp. laumondii (strain DSM 15139 / CIP 105565 / TT01) (Photorhabdus luminescens subsp. laumondii).